A 123-amino-acid polypeptide reads, in one-letter code: Small ribosomal subunit protein uS12cz/uS12cy (123 aa).

It belongs to the universal ribosomal protein uS12 family. Part of the 30S ribosomal subunit.

The protein resides in the plastid. Its subcellular location is the chloroplast. In terms of biological role, with S4 and S5 plays an important role in translational accuracy. Located at the interface of the 30S and 50S subunits. This Eucalyptus globulus subsp. globulus (Tasmanian blue gum) protein is Small ribosomal subunit protein uS12cz/uS12cy (rps12-A).